The following is a 343-amino-acid chain: TATA box-binding protein-like 2 (343 aa).

The tract at residues 71–152 is disordered; the sequence is PDEVTQENKD…SDSLSLASIT (82 aa). The segment covering 76–90 has biased composition (basic and acidic residues); the sequence is QENKDQPVISKHETE. A compositionally biased stretch (low complexity) spans 94–127; the sequence is ESQSPQSRLPSPSEQDVGLGLNSSSLSNSHSQLH. Residues 143-152 show a composition bias toward polar residues; it reads SDSLSLASIT.

Belongs to the TBP family. As to quaternary structure, interacts with TAF3. As to expression, ubiquitously expressed in all tissues examined with highest levels in heart, lung, ovary, spleen and testes.

The protein localises to the cytoplasm. Its subcellular location is the nucleus. Its function is as follows. Transcription factor required in complex with TAF3 for the differentiation of myoblasts into myocytes. The complex replaces TFIID at specific promoters at an early stage in the differentiation process. This chain is TATA box-binding protein-like 2, found in Homo sapiens (Human).